A 61-amino-acid polypeptide reads, in one-letter code: Sec-independent protein translocase protein TatA (61 aa).

The chain crosses the membrane as a helical span at residues methionine 1–phenylalanine 21.

Belongs to the TatA/E family. In terms of assembly, forms a complex with TatC.

It is found in the cell membrane. Its function is as follows. Part of the twin-arginine translocation (Tat) system that transports large folded proteins containing a characteristic twin-arginine motif in their signal peptide across membranes. TatA could form the protein-conducting channel of the Tat system. In Bacillus anthracis (strain A0248), this protein is Sec-independent protein translocase protein TatA.